A 365-amino-acid polypeptide reads, in one-letter code: N5-carboxyaminoimidazole ribonucleotide synthase (365 aa).

Residues R102, K143, 148–154, 177–180, E185, and 256–257 each bind ATP; these read GYDGKGQ, EEYV, and NE. One can recognise an ATP-grasp domain in the interval 106-286; the sequence is KLFYRQHNLP…QFEQHLRAII (181 aa).

This sequence belongs to the PurK/PurT family. Homodimer.

It carries out the reaction 5-amino-1-(5-phospho-beta-D-ribosyl)imidazole + hydrogencarbonate + ATP = 5-carboxyamino-1-(5-phospho-D-ribosyl)imidazole + ADP + phosphate + 2 H(+). It participates in purine metabolism; IMP biosynthesis via de novo pathway; 5-amino-1-(5-phospho-D-ribosyl)imidazole-4-carboxylate from 5-amino-1-(5-phospho-D-ribosyl)imidazole (N5-CAIR route): step 1/2. Its function is as follows. Catalyzes the ATP-dependent conversion of 5-aminoimidazole ribonucleotide (AIR) and HCO(3)(-) to N5-carboxyaminoimidazole ribonucleotide (N5-CAIR). The chain is N5-carboxyaminoimidazole ribonucleotide synthase from Saccharolobus solfataricus (strain ATCC 35092 / DSM 1617 / JCM 11322 / P2) (Sulfolobus solfataricus).